A 60-amino-acid chain; its full sequence is Beta-defensin 11 (60 aa).

Residues 1–22 (MRLHHLLLALLFLVLSAGSGIS) form the signal peptide. Intrachain disulfides connect cysteine 27-cysteine 56, cysteine 34-cysteine 49, and cysteine 39-cysteine 57.

It belongs to the beta-defensin family. In terms of tissue distribution, neutrophilic granules.

The protein resides in the secreted. Functionally, has bactericidal activity. Active against E.coli ML35 and S.aureus 502A. This is Beta-defensin 11 (DEFB11) from Bos taurus (Bovine).